The chain runs to 779 residues: Glucan endo-1,3-beta-D-glucosidase 2 (779 aa).

A disordered region spans residues 1–71 (MCYSRQAIPP…SNPLADSQVN (71 aa)). Residues 57–71 (RTPSSSNPLADSQVN) show a composition bias toward polar residues. A beta-sandwich subdomain region spans residues 73-309 (DNIFQSPVLS…NGLICQLSAD (237 aa)). Residues 73 to 779 (DNIFQSPVLS…WSLAYSGAFS (707 aa)) enclose the GH81 domain. Residues 309–400 (DSVPSIDMAA…LTNSFDMQVQ (92 aa)) are alpha/beta subdomain. The segment at 375-779 (IASSLDSTVK…WSLAYSGAFS (405 aa)) is sufficient for catalytic activity. A (alpha/beta)6 barrel subdomain region spans residues 415–779 (NKKADYSQEK…WSLAYSGAFS (365 aa)). Asp-526 is an active-site residue. Residues His-530, Asp-607, Glu-609, and Glu-613 each coordinate (1,3-beta-D-glucosyl)n. Residues Glu-609 and Glu-613 contribute to the active site. The tract at residues 678–680 (KID) is may provide specificity for triple-helical beta-glucan. Tyr-691 lines the (1,3-beta-D-glucosyl)n pocket.

The protein belongs to the glycosyl hydrolase 81 family.

It is found in the cytoplasm. It catalyses the reaction Hydrolysis of (1-&gt;3)-beta-D-glucosidic linkages in (1-&gt;3)-beta-D-glucans.. With respect to regulation, inhibited by mercury ions. Cleaves internal linkages in 1,3-beta-glucan. The polypeptide is Glucan endo-1,3-beta-D-glucosidase 2 (Saccharomyces cerevisiae (strain ATCC 204508 / S288c) (Baker's yeast)).